Consider the following 418-residue polypeptide: Tryptophan synthase beta chain (418 aa).

Residues 1 to 18 (MTSTLPNASTPDPASLQP) are compositionally biased toward polar residues. Residues 1–23 (MTSTLPNASTPDPASLQPSVRPG) form a disordered region. Lysine 111 bears the N6-(pyridoxal phosphate)lysine mark.

The protein belongs to the TrpB family. Tetramer of two alpha and two beta chains. Requires pyridoxal 5'-phosphate as cofactor.

It carries out the reaction (1S,2R)-1-C-(indol-3-yl)glycerol 3-phosphate + L-serine = D-glyceraldehyde 3-phosphate + L-tryptophan + H2O. It participates in amino-acid biosynthesis; L-tryptophan biosynthesis; L-tryptophan from chorismate: step 5/5. Its function is as follows. The beta subunit is responsible for the synthesis of L-tryptophan from indole and L-serine. This chain is Tryptophan synthase beta chain, found in Parasynechococcus marenigrum (strain WH8102).